A 405-amino-acid chain; its full sequence is S-adenosylmethionine:tRNA ribosyltransferase-isomerase (405 aa).

Belongs to the QueA family. In terms of assembly, monomer.

The protein resides in the cytoplasm. It catalyses the reaction 7-aminomethyl-7-carbaguanosine(34) in tRNA + S-adenosyl-L-methionine = epoxyqueuosine(34) in tRNA + adenine + L-methionine + 2 H(+). It functions in the pathway tRNA modification; tRNA-queuosine biosynthesis. Functionally, transfers and isomerizes the ribose moiety from AdoMet to the 7-aminomethyl group of 7-deazaguanine (preQ1-tRNA) to give epoxyqueuosine (oQ-tRNA). This Psychrobacter cryohalolentis (strain ATCC BAA-1226 / DSM 17306 / VKM B-2378 / K5) protein is S-adenosylmethionine:tRNA ribosyltransferase-isomerase.